Consider the following 456-residue polypeptide: Perilipin-5 (456 aa).

Residues 1 to 20 (MSEDEAAQAPGPSLSEQDQQ) are disordered. The segment at 1 to 108 (MSEDEAAQAP…KLEEKLPFLQ (108 aa)) is interaction with LIPE. The segment at 1–173 (MSEDEAAQAP…HFLPMTEEEL (173 aa)) is essential for lipid droplet targeting. A phosphoserine mark is found at Ser2, Ser148, and Ser324. The interaction with PNPLA2 and ABHD5 stretch occupies residues 185-456 (VGSVEEQRKH…KHTLMPELDF (272 aa)). The disordered stretch occupies residues 420-456 (AWQAQHGEGTVLSGNIPEEEPEPPSRPKHTLMPELDF). Residues 438-456 (EEPEPPSRPKHTLMPELDF) are recruits mitochondria at the lipid droplet surface.

The protein belongs to the perilipin family. Homooligomer. Interacts with PNPLA2; prevents interaction of PNPLA2 with ABHD5. Interacts with ABHD5; targets ABHD5 to lipid droplets and promotes interaction of ABHD5 with PNPLA2. Interacts with LIPE. Phosphorylated by PKA. Phosphorylated on serine in skeletal muscle at rest or upon lipolytic stimulation.

It is found in the lipid droplet. Its subcellular location is the cytoplasm. The protein resides in the mitochondrion. Lipid droplet-associated protein that maintains the balance between lipogenesis and lipolysis and also regulates fatty acid oxidation in oxidative tissues. Recruits mitochondria to the surface of lipid droplets and is involved in lipid droplet homeostasis by regulating both the storage of fatty acids in the form of triglycerides and the release of fatty acids for mitochondrial fatty acid oxidation. In lipid droplet triacylglycerol hydrolysis, plays a role as a scaffolding protein for three major key lipolytic players: ABHD5, PNPLA2 and LIPE. Reduces the triacylglycerol hydrolase activity of PNPLA2 by recruiting and sequestering PNPLA2 to lipid droplets. Phosphorylation by PKA enables lipolysis probably by promoting release of ABHD5 from the perilipin scaffold and by facilitating interaction of ABHD5 with PNPLA2. Also increases lipolysis through interaction with LIPE and upon PKA-mediated phosphorylation of LIPE. This is Perilipin-5 (Plin5) from Ovis aries (Sheep).